A 370-amino-acid chain; its full sequence is Divinyl chlorophyll a/b light-harvesting protein PcbD (370 aa).

Helical transmembrane passes span phenylalanine 27–leucine 47, valine 88–leucine 108, phenylalanine 140–alanine 160, valine 201–valine 221, alanine 248–alanine 268, and leucine 315–leucine 335.

It belongs to the PsbB/PsbC family. IsiA/Pcb subfamily. The antenna complex consists of divinyl chlorophylls (a and b) and divinyl chlorophyll a/b binding proteins and binds more divinyl chlorophyll b than does the antenna complex from high-light-adapted Prochlorococcus. The cofactor is divinyl chlorophyll a. Divinyl chlorophyll b is required as a cofactor.

Its subcellular location is the cellular thylakoid membrane. The antenna complex functions as a light receptor, it captures and delivers excitation energy to photosystems II and I. The Prochlorales pcb genes are not related to higher plant LHCs. This chain is Divinyl chlorophyll a/b light-harvesting protein PcbD (pcbD), found in Prochlorococcus marinus (strain NATL2A).